The chain runs to 548 residues: Leucine-rich repeat-containing protein 56 (548 aa).

LRR repeat units lie at residues 94 to 115, 117 to 138, 139 to 160, 161 to 182, and 186 to 206; these read NLIQLKLNHSCLGSLRDLGTSL, QLQVLWLARCGLTDLDGIGSFL, ALKELYVSYNNISDLSPLCLLE, QLEVLDLEGNNVEDLGQMRYLQ, and RLTTLTLEGNLVCLKPDPGPS. Residues 207–249 enclose the LRRCT domain; sequence NKAPQDYNYRAEVKKLIPQLHILDEVPTTCTNLPAPQKLSQDW. The disordered stretch occupies residues 405–433; that stretch reads LTHVQAQDPQKAPIEQEDQTGPKTSLTPL.

Belongs to the LRRC56 family. In terms of assembly, interacts with IFT88.

Its subcellular location is the cell projection. The protein localises to the cilium. Its function is as follows. Required for the assembly of dynein arms. The polypeptide is Leucine-rich repeat-containing protein 56 (Lrrc56) (Rattus norvegicus (Rat)).